The primary structure comprises 479 residues: Heparin cofactor 2 (479 aa).

The first 23 residues, 1–23, serve as a signal peptide directing secretion; it reads MKHPAYTLLLSLIMSMCAGSKGL. N-linked (GlcNAc...) asparagine glycosylation occurs at asparagine 31. Tandem repeats lie at residues 55–65 and 69–79. The tract at residues 55-79 is 2 X 11 AA approximate repeats, Asp/Glu-rich (acidic) (hirudin-like); the sequence is GEEDDDYLDLEKLLSEDDDYIYVVD. Residues tyrosine 61 and tyrosine 74 each carry the sulfotyrosine modification. An N-linked (GlcNAc...) asparagine glycan is attached at asparagine 168. A glycosaminoglycan-binding site region spans residues 172 to 192; that stretch reads KYEVTTIHNLFRKLTHRLFRR. Asparagine 367 and asparagine 403 each carry an N-linked (GlcNAc...) asparagine glycan.

Belongs to the serpin family. Different composition of the N-linked oligosaccharides appears to yield a 68-kDa and a 72-kDa form.

Functionally, thrombin inhibitor activated by the glycosaminoglycans, heparin or dermatan sulfate. In the presence of the latter, HC-II becomes the predominant thrombin inhibitor in place of antithrombin III (AT). The polypeptide is Heparin cofactor 2 (Serpind1) (Rattus norvegicus (Rat)).